We begin with the raw amino-acid sequence, 446 residues long: Golgi reassembly-stacking protein 1 (446 aa).

The interval 1-20 (MGLGASSEQPAGGEGFHLHG) is disordered. A lipid anchor (N-myristoyl glycine) is attached at Gly-2. 2 consecutive PDZ GRASP-type domains span residues 14–104 (EGFH…FCSF) and 110–198 (HVWH…YGYL). Residues 14-214 (EGFHLHGVQE…PSSQHKKPPG (201 aa)) form a GRASP region. 3 residues coordinate Zn(2+): His-17, His-19, and Cys-102. Positions 189-201 (LGCGIGYGYLHRI) are essential for interaction with GOLGA2/GM130. 2 disordered regions span residues 202-252 (PTQP…LGSR) and 343-446 (VSGP…EPGL). Residues Thr-216, Thr-220, and Thr-224 each carry the phosphothreonine modification. Over residues 343–354 (VSGPEDIGSSSS) the composition is skewed to low complexity. Residues Ser-365, Ser-367, and Ser-376 each carry the phosphoserine modification.

This sequence belongs to the GORASP family. Homodimer. Forms higher-order oligomers under interphase but not mitotic conditions. Dimers of the protein on one membrane might be able to interact with dimers on another and so stack cisternae. Interacts with the C-terminus of GOLGA2/GM130 under both mitotic and non-mitotic conditions. The interaction is critical for the correct targeting of both proteins to the cis-Golgi. Interacts with TMED2 and TMED3. Phosphorylated by CDC2/B1 and PLK kinases during mitosis. Phosphorylation cycle correlates with the cisternal stacking cycle. Phosphorylation of the homodimer prevents the association of dimers into higher-order oligomers, leading to cisternal unstacking. In terms of processing, target for caspase-3 cleavage during apoptosis. The cleavage contributes to Golgi fragmentation and occurs very early in the execution phase of apoptosis. Post-translationally, myristoylated.

It is found in the golgi apparatus. The protein localises to the cis-Golgi network membrane. In terms of biological role, key structural protein of the Golgi apparatus. The membrane cisternae of the Golgi apparatus adhere to each other to form stacks, which are aligned side by side to form the Golgi ribbon. Acting in concert with GORASP2/GRASP55, is required for the formation and maintenance of the Golgi ribbon, and may be dispensable for the formation of stacks. However, other studies suggest that GORASP1 plays an important role in assembly and membrane stacking of the cisternae, and in the reassembly of Golgi stacks after breakdown during mitosis. Caspase-mediated cleavage of GORASP1 is required for fragmentation of the Golgi during apoptosis. Also mediates, via its interaction with GOLGA2/GM130, the docking of transport vesicles with the Golgi membranes. Mediates ER stress-induced unconventional (ER/Golgi-independent) trafficking of core-glycosylated CFTR to cell membrane. The protein is Golgi reassembly-stacking protein 1 (Gorasp1) of Mus musculus (Mouse).